The following is a 1148-amino-acid chain: Maintenance of telomere capping protein 5 (1148 aa).

5 WD repeats span residues 63–106 (HHIT…SNAI), 112–152 (GHSR…RPFY), 156–195 (SWRS…TPLC), 199–239 (GHVS…TESK), and 299–348 (GHSD…YGKV). An RWD domain is found at 432–543 (EEVSAIGHKF…RFVLGEKVSL (112 aa)). Ser759 is subject to Phosphoserine. The segment at 963–990 (THNTLNGSSKFTEPAQKQGSRAISSSPF) is disordered. Polar residues predominate over residues 964–990 (HNTLNGSSKFTEPAQKQGSRAISSSPF).

It belongs to the WD repeat WDR59 family. Component of the SEA complex composed of at least IML1/SEA1, RTC1/SEA2, MTC5/SEA3, NPR2, NPR3, SEA4, SEC13 and SEH1.

Its subcellular location is the vacuole membrane. Functionally, component of the SEA complex which coats the vacuolar membrane and is involved in intracellular trafficking, autophagy, response to nitrogen starvation, and amino acid biogenesis. May be involved in telomere capping. This chain is Maintenance of telomere capping protein 5 (MTC5), found in Saccharomyces cerevisiae (strain ATCC 204508 / S288c) (Baker's yeast).